Reading from the N-terminus, the 527-residue chain is MLKASLLSFVAFTAQVAHAAFGITTSSSAYVIDTNAPNQLKFTVSRSSCDITSIIHYGTELQYSSQGSHIGSGLGSATVTATQSGDYIKVTCVTDTLTQYMVVHNGDPIIHMATYITAEPSIGELRFIARLNSDLLPNEEPFGDVSTTADGTAIEGSDVFLVGSETRSKFYSSERFIDDQRHCIAGDAHRVCMILNQYESSSGGPFHRDINSNNGGSYNALYWYMNSGHVQTESYRMGLHGPYSMYFSRSGTPSTSIDTSFFADLDIKGYVAASGRGKVAGTASGADSSMDWVVHWYNDAAQYWTYTSSSGSFTSPAMKPGTYTMVYYQGEYAVATSSVTVSAGSTTTKNISGSVKTGTTIFKIGEWDGQPTGFRNAANQLRMHPSDSRMSSWGPLTYTVGSSALTDFPMAVFKSVNNPVTIKFTATSAQTGAATLRIGTTLSFAGGRPQATINSYTGSAPAAPTNLDSRGVTRGAYRGLGEVYDVSIPSGTIVAGTNTITINVISGSSGDTYLSPNFIFDCVELFQ.

A signal peptide spans 1 to 19 (MLKASLLSFVAFTAQVAHA). 2 cysteine pairs are disulfide-bonded: Cys49–Cys92 and Cys183–Cys192. The N-linked (GlcNAc...) asparagine glycan is linked to Asn350.

It belongs to the polysaccharide lyase 4 family.

The protein resides in the secreted. The catalysed reaction is Endotype eliminative cleavage of L-alpha-rhamnopyranosyl-(1-&gt;4)-alpha-D-galactopyranosyluronic acid bonds of rhamnogalacturonan I domains in ramified hairy regions of pectin leaving L-rhamnopyranose at the reducing end and 4-deoxy-4,5-unsaturated D-galactopyranosyluronic acid at the non-reducing end.. Pectinolytic enzyme that has a positive effect in the apple hot-mash liquefaction process. This endolyase hydrolyzes the alpha-L-rhamnopyranosyl-(1,4)-alpha-D-galacturonopyranosyl glycosidic linkage by beta-elimination, thereby generating oligosaccharides terminating at the non-reducing end with a hex-4-enopyranosyluronic acid residue. The polypeptide is Rhamnogalacturonate lyase A (rglA) (Aspergillus aculeatus).